We begin with the raw amino-acid sequence, 73 residues long: Mauriporin (73 aa).

Positions 1–22 (MNKKTLLVIFFITMLIVDEVNS) are cleaved as a signal peptide.

Belongs to the non-disulfide-bridged peptide (NDBP) superfamily. Long chain multifunctional peptide (group 2) family. As to expression, expressed by the venom gland.

Its subcellular location is the secreted. The protein resides in the target cell membrane. Functionally, amphipathic peptide that displays potent antimicrobial activities against a range of Gram-positive and Gram-negative planktonic bacteria with MIC values in the range 5 uM to 10 uM. In more details, it is active on Listeria ivanovii (MIC=5 uM), Staphylococcus epidermidis (MIC=10 uM), Salmonella enterica (MIC=5 uM), Pseudomonas aeruginosa (ATCC 27853) (MIC=5 uM), Acinetobacter baumannii (MIC=5 uM), Klebsiella pneumoniae (MIC=5 uM), Escherichia coli (MIC=7.5 uM), Salmonella typhimurium (MIC=7.5 uM), Pseudomonas aeruginosa (ATCC 9027) (MIC=10 uM). Is also able to prevent P.aeruginosa biofilm formation while showing weak hemolytic activity towards human erythrocytes. Probably induces bacterial cell death through membrane permeabilization. Moreover, shows DNA-binding activities. Also exerts potent selective cytotoxic and antiproliferative activity against three different prostate cancer cell lines (IC(50)=4.4-7.8 uM), compared to non-tumorigenic cell lines (IC(50)=59.7 uM in Vero and 62.5 uM in HUVEC cells). This peptide possibly exerts its cytotoxic activity through a necrotic mode of cell death. Only shows diminished hemolytic activity against sheep erythrocytes. Does not induce cell death through apoptosis and consequently is not acting upon an intracellular target. This chain is Mauriporin, found in Androctonus mauritanicus (Fat-tailed scorpion).